We begin with the raw amino-acid sequence, 309 residues long: Elongation factor Ts (309 aa).

The involved in Mg(2+) ion dislocation from EF-Tu stretch occupies residues 82–85; sequence TDFV.

It belongs to the EF-Ts family.

Its subcellular location is the cytoplasm. In terms of biological role, associates with the EF-Tu.GDP complex and induces the exchange of GDP to GTP. It remains bound to the aminoacyl-tRNA.EF-Tu.GTP complex up to the GTP hydrolysis stage on the ribosome. The polypeptide is Elongation factor Ts (Rickettsia typhi (strain ATCC VR-144 / Wilmington)).